The sequence spans 40 residues: Sapecin-C (40 aa).

3 disulfides stabilise this stretch: C3–C30, C16–C36, and C20–C38.

It belongs to the invertebrate defensin family. Type 1 subfamily. In terms of tissue distribution, hemocytes and fat body.

The protein resides in the secreted. Its function is as follows. Sapecins, which are potent bactericidal proteins, are produced in response to injury. Sapecin C is cytotoxic to Gram-positive bacteria. This is Sapecin-C from Sarcophaga peregrina (Flesh fly).